Consider the following 179-residue polypeptide: Acireductone dioxygenase (179 aa).

The segment covering 1–12 (MVEAWYMDDSEE) has biased composition (acidic residues). The disordered stretch occupies residues 1-21 (MVEAWYMDDSEEDQRRPHRLE). Residues His88, His90, Glu94, and His133 each contribute to the Fe(2+) site. His88, His90, Glu94, and His133 together coordinate Ni(2+).

Belongs to the acireductone dioxygenase (ARD) family. As to quaternary structure, monomer. Interacts with MMP14. It depends on Fe(2+) as a cofactor. Ni(2+) is required as a cofactor.

It is found in the cytoplasm. Its subcellular location is the nucleus. The protein localises to the cell membrane. It carries out the reaction 1,2-dihydroxy-5-(methylsulfanyl)pent-1-en-3-one + O2 = 4-methylsulfanyl-2-oxobutanoate + formate + 2 H(+). It catalyses the reaction 1,2-dihydroxy-5-(methylsulfanyl)pent-1-en-3-one + O2 = 3-(methylsulfanyl)propanoate + CO + formate + 2 H(+). It functions in the pathway amino-acid biosynthesis; L-methionine biosynthesis via salvage pathway; L-methionine from S-methyl-5-thio-alpha-D-ribose 1-phosphate: step 5/6. Its function is as follows. Catalyzes 2 different reactions between oxygen and the acireductone 1,2-dihydroxy-3-keto-5-methylthiopentene (DHK-MTPene) depending upon the metal bound in the active site. Fe-containing acireductone dioxygenase (Fe-ARD) produces formate and 2-keto-4-methylthiobutyrate (KMTB), the alpha-ketoacid precursor of methionine in the methionine recycle pathway. Ni-containing acireductone dioxygenase (Ni-ARD) produces methylthiopropionate, carbon monoxide and formate, and does not lie on the methionine recycle pathway. Also down-regulates cell migration mediated by MMP14. The chain is Acireductone dioxygenase from Monodelphis domestica (Gray short-tailed opossum).